A 122-amino-acid polypeptide reads, in one-letter code: Large ribosomal subunit protein uL14 (122 aa).

The protein belongs to the universal ribosomal protein uL14 family. In terms of assembly, part of the 50S ribosomal subunit. Forms a cluster with proteins L3 and L19. In the 70S ribosome, L14 and L19 interact and together make contacts with the 16S rRNA in bridges B5 and B8.

Functionally, binds to 23S rRNA. Forms part of two intersubunit bridges in the 70S ribosome. The chain is Large ribosomal subunit protein uL14 from Nitrobacter winogradskyi (strain ATCC 25391 / DSM 10237 / CIP 104748 / NCIMB 11846 / Nb-255).